A 1411-amino-acid polypeptide reads, in one-letter code: DNA-directed RNA polymerase subunit beta' (1411 aa).

The Zn(2+) site is built by Cys-69, Cys-71, Cys-84, and Cys-87. Residues Asp-461, Asp-463, and Asp-465 each coordinate Mg(2+). The Zn(2+) site is built by Cys-809, Cys-883, Cys-890, and Cys-893.

The protein belongs to the RNA polymerase beta' chain family. In terms of assembly, the RNAP catalytic core consists of 2 alpha, 1 beta, 1 beta' and 1 omega subunit. When a sigma factor is associated with the core the holoenzyme is formed, which can initiate transcription. Requires Mg(2+) as cofactor. Zn(2+) serves as cofactor.

It carries out the reaction RNA(n) + a ribonucleoside 5'-triphosphate = RNA(n+1) + diphosphate. In terms of biological role, DNA-dependent RNA polymerase catalyzes the transcription of DNA into RNA using the four ribonucleoside triphosphates as substrates. The protein is DNA-directed RNA polymerase subunit beta' of Ehrlichia ruminantium (strain Gardel).